The primary structure comprises 401 residues: Imidazolonepropionase (401 aa).

His70 and His72 together coordinate Fe(3+). Positions 70 and 72 each coordinate Zn(2+). The 4-imidazolone-5-propanoate site is built by Arg79, Tyr142, and His175. Tyr142 lines the N-formimidoyl-L-glutamate pocket. His238 provides a ligand contact to Fe(3+). His238 is a Zn(2+) binding site. 4-imidazolone-5-propanoate is bound at residue Gln241. A Fe(3+)-binding site is contributed by Asp313. Asp313 serves as a coordination point for Zn(2+). Residues Asn315 and Gly317 each coordinate N-formimidoyl-L-glutamate. A 4-imidazolone-5-propanoate-binding site is contributed by Thr318.

This sequence belongs to the metallo-dependent hydrolases superfamily. HutI family. Zn(2+) is required as a cofactor. The cofactor is Fe(3+).

Its subcellular location is the cytoplasm. It catalyses the reaction 4-imidazolone-5-propanoate + H2O = N-formimidoyl-L-glutamate. It participates in amino-acid degradation; L-histidine degradation into L-glutamate; N-formimidoyl-L-glutamate from L-histidine: step 3/3. Its function is as follows. Catalyzes the hydrolytic cleavage of the carbon-nitrogen bond in imidazolone-5-propanoate to yield N-formimidoyl-L-glutamate. It is the third step in the universal histidine degradation pathway. This is Imidazolonepropionase from Xanthomonas axonopodis pv. citri (strain 306).